Consider the following 485-residue polypeptide: Calcium/manganese antiporter SLC30A10 (485 aa).

The Cytoplasmic segment spans residues 1-10 (MGRYSGKTCR). A helical transmembrane segment spans residues 11–31 (LLFMLVLTVAFFVAELVSGYL). Topologically, residues 32 to 40 (GNSIALLSD) are extracellular. A helical membrane pass occupies residues 41–61 (SFNMLSDLISLCVGLSAGYIA). The Cytoplasmic segment spans residues 62 to 81 (RRPTRGFSATYGYARAEVVG). A helical membrane pass occupies residues 82-102 (ALSNAVFLTALCFTIFVEAVL). The Extracellular portion of the chain corresponds to 103-113 (RLARPERIDDP). A helical transmembrane segment spans residues 114 to 134 (ELVLIVGVLGLLVNVVGLLIF). Topologically, residues 135-244 (QDCAAWFACC…ALNIRGVLLH (110 aa)) are cytoplasmic. The segment at 167-196 (FGGPQGAEDPRRAADPTAPGSDSAVTLRGT) is disordered. The helical transmembrane segment at 245–265 (VMGDALGSVVVVITAIIFYVL) threads the bilayer. Residues 266–278 (PLKSEDPCNWQCY) lie on the Extracellular side of the membrane. The helical transmembrane segment at 279–299 (IDPSLTVLMVIIILSSAFPLI) threads the bilayer. The Cytoplasmic segment spans residues 300–485 (KETAAILLQM…DQCYVNRTHF (186 aa)). Residues 308 to 485 (QMVPKGVNME…DQCYVNRTHF (178 aa)) are required for plasma membrane localization.

Belongs to the cation diffusion facilitator (CDF) transporter (TC 2.A.4) family. SLC30A subfamily. As to quaternary structure, forms homodimers. Forms heterodimers and high-molecular weight oligomers with SLC30A3, SLC30A2 and SLC30A4; heterodimerization is mediated by covalent-bound tyrosine residues, occurs probably in a tissue-specific manner and could mediate the intracellular zinc transport activity into early endosomes and recycling endosomes. In terms of tissue distribution, specifically expressed in fetal liver and fetal brain. Expressed in adult tissues with relative levels small intestine &gt; liver &gt; testes &gt; brain &gt; ovary &gt; colon &gt; cervix &gt; prostate &gt; placenta. Expressed in liver and neurons of the nervous system (at protein level).

It is found in the cell membrane. Its subcellular location is the golgi apparatus membrane. It localises to the recycling endosome membrane. The protein localises to the early endosome membrane. It carries out the reaction Mn(2+)(out) + Ca(2+)(in) = Mn(2+)(in) + Ca(2+)(out). It catalyses the reaction Zn(2+)(in) = Zn(2+)(out). Functionally, calcium:manganese antiporter of the plasma membrane mediating the efflux of intracellular manganese coupled to an active extracellular calcium exchange. Required for intracellular manganese homeostasis, an essential cation for the function of several enzymes, including some crucially important for the metabolism of neurotransmitters and other neuronal metabolic pathways. Manganese can also be cytotoxic and induce oxidative stress, mitochondrial dysfunction and apoptosis. Could also have an intracellular zinc ion transporter activity, directly regulating intracellular zinc ion homeostasis and more indirectly various signaling pathway and biological processes. The chain is Calcium/manganese antiporter SLC30A10 from Homo sapiens (Human).